Here is a 239-residue protein sequence, read N- to C-terminus: Uridylate kinase (239 aa).

10 to 13 (KLSG) is a binding site for ATP. The segment at 18–23 (GEDGYG) is involved in allosteric activation by GTP. Residue Gly-52 participates in UMP binding. Residues Gly-53 and Arg-57 each coordinate ATP. UMP is bound by residues Asp-72 and 133 to 140 (TGNPYFTT). ATP is bound by residues Thr-160, Tyr-166, and Asp-169.

Belongs to the UMP kinase family. Homohexamer.

Its subcellular location is the cytoplasm. The catalysed reaction is UMP + ATP = UDP + ADP. The protein operates within pyrimidine metabolism; CTP biosynthesis via de novo pathway; UDP from UMP (UMPK route): step 1/1. Its activity is regulated as follows. Allosterically activated by GTP. Inhibited by UTP. In terms of biological role, catalyzes the reversible phosphorylation of UMP to UDP. In Chlorobium chlorochromatii (strain CaD3), this protein is Uridylate kinase.